The primary structure comprises 159 residues: Large ribosomal subunit protein eL29 (159 aa).

A compositionally biased stretch (basic residues) spans 1-26; that stretch reads MAKSKNHTTHNQSRKWHRNGIKKPRS. The segment at 1–32 is disordered; sequence MAKSKNHTTHNQSRKWHRNGIKKPRSQRYESL. N6-methyllysine is present on lysine 5. At serine 31 the chain carries Phosphoserine. Lysine 33 carries the post-translational modification N6-acetyllysine. Residues 117–127 show a composition bias toward basic residues; sequence RLCRPKAKAKA. The tract at residues 117-159 is disordered; the sequence is RLCRPKAKAKAKAKDQTKAQAAAPASVPAQAPKRTQAPTKASE. Residues 134 to 149 are compositionally biased toward low complexity; that stretch reads KAQAAAPASVPAQAPK. Serine 142 is subject to Phosphoserine.

Belongs to the eukaryotic ribosomal protein eL29 family. In terms of assembly, component of the large ribosomal subunit.

It is found in the cytoplasm. Its function is as follows. Component of the large ribosomal subunit. The ribosome is a large ribonucleoprotein complex responsible for the synthesis of proteins in the cell. The protein is Large ribosomal subunit protein eL29 (RPL29) of Homo sapiens (Human).